The chain runs to 222 residues: Peptide methionine sulfoxide reductase MsrA 1 (222 aa).

Cys57 is a catalytic residue.

It belongs to the MsrA Met sulfoxide reductase family.

The catalysed reaction is L-methionyl-[protein] + [thioredoxin]-disulfide + H2O = L-methionyl-(S)-S-oxide-[protein] + [thioredoxin]-dithiol. The enzyme catalyses [thioredoxin]-disulfide + L-methionine + H2O = L-methionine (S)-S-oxide + [thioredoxin]-dithiol. Its function is as follows. Has an important function as a repair enzyme for proteins that have been inactivated by oxidation. Catalyzes the reversible oxidation-reduction of methionine sulfoxide in proteins to methionine. The polypeptide is Peptide methionine sulfoxide reductase MsrA 1 (msrA1) (Synechocystis sp. (strain ATCC 27184 / PCC 6803 / Kazusa)).